The primary structure comprises 185 residues: UPF0301 protein HDEF_0602 (185 aa).

The protein belongs to the UPF0301 (AlgH) family.

This chain is UPF0301 protein HDEF_0602, found in Hamiltonella defensa subsp. Acyrthosiphon pisum (strain 5AT).